The sequence spans 444 residues: MSKTYHFIGIKGSGMSALALMLYQMGHKVQGSDVEKYYFTQRGLEQAGITILPFDEKNLDGDMEIIAGNAFRPDNNVEIAYADQNGISYKRYHEFLGSFMRDFVSMGVAGAHGKTSTTGMLSHVLSHITDTSFLIGDGTGRGSANAKYFVFESDEYERHFMPYHPEYSIITNIDFDHPDYFTSLEDVFNAFNDYAKQITKGLFVYGEDAELRKITSDAPIYYYGFEAEGNDFVASDLLRSTTGSTFTVHFRGQNLGQFHIPTFGRHNIMNATAVIGLLYTAGFDLNLVREHLKTFSGVKRRFTEKIVNDTVIIDDFAHHPTEIIATLDAARQKYPSKEIVAVFQPHTFTRTIALLDDFAHALNQADAVYLAQIYGSAREVDHGDVKVEDLANKINKKHQVITVENVSPLLDHDNAVYVFMGAGDIQTYEYSFERLLSNLTSNVQ.

Gly110–Ser116 is a binding site for ATP.

This sequence belongs to the MurCDEF family.

Its subcellular location is the cytoplasm. The catalysed reaction is UDP-N-acetyl-alpha-D-muramate + L-alanine + ATP = UDP-N-acetyl-alpha-D-muramoyl-L-alanine + ADP + phosphate + H(+). Its pathway is cell wall biogenesis; peptidoglycan biosynthesis. Functionally, cell wall formation. The protein is UDP-N-acetylmuramate--L-alanine ligase of Streptococcus pneumoniae (strain JJA).